The following is a 62-amino-acid chain: UPF0434 protein FTM_0733 (62 aa).

The protein belongs to the UPF0434 family.

This Francisella tularensis subsp. mediasiatica (strain FSC147) protein is UPF0434 protein FTM_0733.